We begin with the raw amino-acid sequence, 148 residues long: Putative carbonic anhydrase (148 aa).

The region spanning 1–146 is the Alpha-carbonic anhydrase domain; the sequence is CLKRLQPGEM…LNGRTVFEVH (146 aa).

The protein belongs to the alpha-carbonic anhydrase family. It depends on Zn(2+) as a cofactor. In terms of tissue distribution, component of the acid-insoluble organic matrix of the aragonitic skeleton (at protein level).

The protein resides in the secreted. The catalysed reaction is hydrogencarbonate + H(+) = CO2 + H2O. In terms of biological role, reversible hydration of carbon dioxide. The polypeptide is Putative carbonic anhydrase (Acropora millepora (Staghorn coral)).